Reading from the N-terminus, the 447-residue chain is Tektin-4 (447 aa).

2 coiled-coil regions span residues 322 to 348 and 375 to 423; these read LRKT…DKEA and FRLL…TNSL.

This sequence belongs to the tektin family. In terms of assembly, microtubule inner protein component of sperm flagellar doublet microtubules. Ubiquitinated, leading to its degradation. Deubiquitinated by USP16, promoting its stability. As to expression, detected in testis, where it is weakly expressed in round spermatids, and strongly expressed in the flagellum of step 16 elongated spermatids (at protein level). Expressed in spermatozoa. In the sperm flagellum, localizes to the principal piece and midpiece (at protein level). Specifically expressed in testis; not detected in other tissues tested.

It is found in the cytoplasm. The protein resides in the cytoskeleton. The protein localises to the cilium axoneme. It localises to the flagellum axoneme. Functionally, microtubule inner protein (MIP) part of the dynein-decorated doublet microtubules (DMTs) in cilia and flagellar axoneme. Forms filamentous polymers in the walls of ciliary and flagellar microtubules. Contributes to normal sperm motility. The protein is Tektin-4 (Tekt4) of Mus musculus (Mouse).